A 600-amino-acid polypeptide reads, in one-letter code: CoA ligase FVEG_12633 (600 aa).

ATP-binding positions include 170 to 174 (TSGTT), H214, 321 to 323 (AAL), and 342 to 343 (ER). Residues 241-342 (NSVWTRLAAP…QLTGGNVLLE (102 aa)) are SBD1. Residues 343-420 (RYGMTEVGMA…LRGPTVFTGY (78 aa)) are SBD2. M346 lines the substrate pocket. Positions 347, 441, 471, and 564 each coordinate ATP. K564 is an oxalate binding site.

The protein belongs to the ATP-dependent AMP-binding enzyme family.

In terms of biological role, coA ligase; part of the Fusarium detoxification of benzoxazolinone cluster 2 (FDB2) involved in the degradation of benzoxazolinones produced by the host plant. Maize, wheat, and rye produce the 2 benzoxazinone phytoanticipins 2,4-dihy-droxy-7-methoxy-1,4-benzoxazin-3-one (DIMBOA) and 2,4-dihydroxy-1,4-benzoxazin-3-one (DIBOA) that, due to their inherent instability once released, spontaneously degrade to the more stable corresponding benzoxazolinones, 6-methoxy-2-benzoxazolinone (MBOA) and 2-benzoxazolinone (BOA), respectively. The first step in the detoxification of benzoxazolinones involves the hydrolysis of the cyclic ester bond of benzoxazolinones by the FDB1 cluster gamma-lactamase MBL1 to aminophenols. MBL1 is able to convert BOA into 2-aminophenol (2-AP), as well as MBOA into 5-methoxy-2-aminophenol (2-AMP). The FDB2 cluster N-malonyltransferase FDB2/NAT1 then metabolizes aminophenols via N-malonylation to non-toxic malonamic acids. FDB2/NAT1 converts 2-AP into N-(2-hydroxyphenyl) malonamic acid (HPMA) and 2-AMP into N-(2-hydroxy-4-methoxyphenyl) malonamic acid (HMPMA). The duplicated dienlactone hydrolases DLH1 and DLH2 may provide redundant function for hydrolyzing the lactone moiety in the BOA molecule. The roles of the amidases an other enzymes encoded by the 2 FDB clusters have not been identified so far. This Gibberella moniliformis (strain M3125 / FGSC 7600) (Maize ear and stalk rot fungus) protein is CoA ligase FVEG_12633.